The chain runs to 61 residues: Small ribosomal subunit protein uS14 (61 aa).

Residues C24, C27, C40, and C43 each coordinate Zn(2+).

It belongs to the universal ribosomal protein uS14 family. Zinc-binding uS14 subfamily. As to quaternary structure, part of the 30S ribosomal subunit. Contacts proteins S3 and S10. It depends on Zn(2+) as a cofactor.

Its function is as follows. Binds 16S rRNA, required for the assembly of 30S particles and may also be responsible for determining the conformation of the 16S rRNA at the A site. The protein is Small ribosomal subunit protein uS14 of Mycoplasmopsis pulmonis (strain UAB CTIP) (Mycoplasma pulmonis).